The following is a 164-amino-acid chain: UPF0114 protein KPN78578_33570 (164 aa).

4 helical membrane passes run 15–35, 53–73, 109–126, and 136–156; these read LLAPVYFGLSLGLIALTIKFF, MILTLLSLVDMTLVGGLLVMV, VAASIVAISSIHLLRVFM, and LMWYVIIHLTFVLSAFVMGYL.

This sequence belongs to the UPF0114 family.

The protein resides in the cell membrane. The protein is UPF0114 protein KPN78578_33570 of Klebsiella pneumoniae subsp. pneumoniae (strain ATCC 700721 / MGH 78578).